Reading from the N-terminus, the 280-residue chain is Energy-coupling factor transporter ATP-binding protein EcfA1 (280 aa).

The 239-residue stretch at 6-244 (IECKNVVYKY…VPLMKNIGLD (239 aa)) folds into the ABC transporter domain. 43–50 (GHNGSGKS) lines the ATP pocket.

The protein belongs to the ABC transporter superfamily. Energy-coupling factor EcfA family. Forms a stable energy-coupling factor (ECF) transporter complex composed of 2 membrane-embedded substrate-binding proteins (S component), 2 ATP-binding proteins (A component) and 2 transmembrane proteins (T component).

The protein localises to the cell membrane. ATP-binding (A) component of a common energy-coupling factor (ECF) ABC-transporter complex. Unlike classic ABC transporters this ECF transporter provides the energy necessary to transport a number of different substrates. The chain is Energy-coupling factor transporter ATP-binding protein EcfA1 from Clostridium novyi (strain NT).